Here is a 78-residue protein sequence, read N- to C-terminus: D-alanyl carrier protein (78 aa).

A Carrier domain is found at 1-78; it reads MDVENTVVEI…KIIAKAKELQ (78 aa). O-(pantetheine 4'-phosphoryl)serine is present on S36.

Belongs to the DltC family. In terms of processing, 4'-phosphopantetheine is transferred from CoA to a specific serine of apo-DCP.

It localises to the cytoplasm. Its pathway is cell wall biogenesis; lipoteichoic acid biosynthesis. Its function is as follows. Carrier protein involved in the D-alanylation of lipoteichoic acid (LTA). The loading of thioester-linked D-alanine onto DltC is catalyzed by D-alanine--D-alanyl carrier protein ligase DltA. The DltC-carried D-alanyl group is further transferred to cell membrane phosphatidylglycerol (PG) by forming an ester bond, probably catalyzed by DltD. D-alanylation of LTA plays an important role in modulating the properties of the cell wall in Gram-positive bacteria, influencing the net charge of the cell wall. This chain is D-alanyl carrier protein, found in Latilactobacillus sakei subsp. sakei (strain 23K) (Lactobacillus sakei subsp. sakei).